The chain runs to 439 residues: tRNA modification GTPase MnmE (439 aa).

Residues R24, E81, and K121 each contribute to the (6S)-5-formyl-5,6,7,8-tetrahydrofolate site. The TrmE-type G domain occupies 218–363; the sequence is GFKVVIAGAP…LRDLIGRVVK (146 aa). K(+) is bound at residue N228. GTP is bound by residues 228–233, 247–253, and 272–275; these read NAGKSS, TDIAGTT, and DTAG. S232 is a Mg(2+) binding site. K(+) contacts are provided by T247, I249, and T252. T253 is a Mg(2+) binding site. K439 contributes to the (6S)-5-formyl-5,6,7,8-tetrahydrofolate binding site.

This sequence belongs to the TRAFAC class TrmE-Era-EngA-EngB-Septin-like GTPase superfamily. TrmE GTPase family. Homodimer. Heterotetramer of two MnmE and two MnmG subunits. K(+) serves as cofactor.

It is found in the cytoplasm. Its function is as follows. Exhibits a very high intrinsic GTPase hydrolysis rate. Involved in the addition of a carboxymethylaminomethyl (cmnm) group at the wobble position (U34) of certain tRNAs, forming tRNA-cmnm(5)s(2)U34. The polypeptide is tRNA modification GTPase MnmE (Rhizobium etli (strain CIAT 652)).